We begin with the raw amino-acid sequence, 181 residues long: Mytilin-1 (181 aa).

An N-terminal signal peptide occupies residues 1-22 (MISKYCLFVIVLGTTGTALVLT).

In terms of tissue distribution, component of the organic matrix of calcified shell layers like nacre and prisms.

Its subcellular location is the secreted. This Mytilus galloprovincialis (Mediterranean mussel) protein is Mytilin-1.